A 345-amino-acid chain; its full sequence is MFSSLYPLARASLFKMDAEDAHHLTLRALGAAGRTGLACALSARVPDAPRTVMGLTFRNPVGLAAGLDKDGAAIDGLASLGFGFIEVGTVTPRPQPGNPRPRMFRLPQADALINRMGFNNHGVDQFVKNVQAARYRGILGLNIGKNADTPIERAAEDYLYCLERVYPFASYVTINISSPNTKNLRQLQGAGELDALLAALKDKQQRLADLHGKLVPLALKIAPDLDDEQVKEIGDTLLRHKIEAVIATNTTLSRAAVQGLPHADEAGGLSGRPVFDASNEVIRKLHAEVGSAVPIIGVGGIFSGEDARVKLAAGASLVQLYTGFIYRGPALVAECVKAIARERTA.

FMN contacts are provided by residues 65–69 (AGLDK) and Thr-89. Lys-69 provides a ligand contact to substrate. 114 to 118 (NRMGF) contributes to the substrate binding site. Positions 142 and 175 each coordinate FMN. Residue Asn-175 coordinates substrate. The Nucleophile role is filled by Ser-178. Asn-180 contacts substrate. Lys-220 and Thr-248 together coordinate FMN. 249 to 250 (NT) lines the substrate pocket. FMN-binding positions include Gly-271, Gly-300, and 321 to 322 (YT).

The protein belongs to the dihydroorotate dehydrogenase family. Type 2 subfamily. As to quaternary structure, monomer. FMN is required as a cofactor.

The protein resides in the cell membrane. It catalyses the reaction (S)-dihydroorotate + a quinone = orotate + a quinol. Its pathway is pyrimidine metabolism; UMP biosynthesis via de novo pathway; orotate from (S)-dihydroorotate (quinone route): step 1/1. Functionally, catalyzes the conversion of dihydroorotate to orotate with quinone as electron acceptor. This Burkholderia ambifaria (strain ATCC BAA-244 / DSM 16087 / CCUG 44356 / LMG 19182 / AMMD) (Burkholderia cepacia (strain AMMD)) protein is Dihydroorotate dehydrogenase (quinone).